The sequence spans 38 residues: Large ribosomal subunit protein bL36 (38 aa).

Belongs to the bacterial ribosomal protein bL36 family.

The sequence is that of Large ribosomal subunit protein bL36 from Flavobacterium psychrophilum (strain ATCC 49511 / DSM 21280 / CIP 103535 / JIP02/86).